The chain runs to 421 residues: Testin (421 aa).

The PET domain occupies 92–199 (MILTNPVAAK…GDVKLPREMN (108 aa)). Residues 133-164 (EKQPVAGSEGAQYRKKQLAKQLPAHDQDPSKC) form a disordered region. Residues 155–164 (PAHDQDPSKC) show a composition bias toward basic and acidic residues. 3 consecutive LIM zinc-binding domains span residues 234–297 (YSCY…CDSE), 299–359 (PRCA…NHAV), and 362–421 (QGCH…KMMS).

It belongs to the prickle / espinas / testin family. As to quaternary structure, interacts via LIM domain 1 with ZYX. Interacts (via LIM domain 3) with ENAH and VASP. Interacts with ALKBH4, talin, actin, alpha-actinin, GRIP1 and PXN. Interacts (via LIM domain 2) with ACTL7A (via N-terminus). Heterodimer with ACTL7A; the heterodimer interacts with ENAH to form a heterotrimer.

Its subcellular location is the cytoplasm. The protein localises to the cell junction. It localises to the focal adhesion. Functionally, scaffold protein that may play a role in cell adhesion, cell spreading and in the reorganization of the actin cytoskeleton. Plays a role in the regulation of cell proliferation. May act as a tumor suppressor. The sequence is that of Testin (TES) from Sus scrofa (Pig).